A 387-amino-acid chain; its full sequence is Putative odorant receptor 19b (387 aa).

Topologically, residues 1 to 40 are cytoplasmic; it reads MDISKVDSTRALVNHWRIFRIMGIHPPGKRTFWGRHYTAY. The helical transmembrane segment at 41-61 threads the bilayer; it reads SMVWNVTFHICIWVSFSVNLL. The Extracellular portion of the chain corresponds to 62 to 71; the sequence is QSNSLETFCE. A helical membrane pass occupies residues 72-92; the sequence is SLCVTMPHTLYMLKLINVRRM. Residues 93 to 127 are Cytoplasmic-facing; that stretch reads RGEMISSHWLLRLLDKRLGCADERQIIMAGIERAE. The chain crosses the membrane as a helical span at residues 128 to 148; sequence FIFRTIFRGLACTVVLGIIYI. The Extracellular segment spans residues 149 to 171; it reads SASSEPTLMYPTWIPWNWKDSTS. Residues 172 to 192 form a helical membrane-spanning segment; the sequence is AYLATAMLHTTALMANATLVL. The Cytoplasmic segment spans residues 193-254; that stretch reads NLSSYPGTYL…LRLFKSLERS (62 aa). The chain crosses the membrane as a helical span at residues 255–275; the sequence is LSMTCFLQFFSTACAQCTICY. Over 276-285 the chain is Extracellular; that stretch reads FLLFGNVGIM. The helical transmembrane segment at 286–306 threads the bilayer; the sequence is RFMNMLFLLVILTTETLLLCY. Topologically, residues 307 to 336 are cytoplasmic; the sequence is TAELPCKEGESLLTAVYSCNWLSQSVNFRR. The helical transmembrane segment at 337 to 357 threads the bilayer; it reads LLLLMLARCQIPMILVSGVIV. Over 358-387 the chain is Extracellular; it reads PISMKTFTVMIKGAYTMLTLLNEIRKTSLE.

Belongs to the insect chemoreceptor superfamily. Heteromeric odorant receptor channel (TC 1.A.69) family. Or2a subfamily. In terms of assembly, interacts with Orco. Complexes exist early in the endomembrane system in olfactory sensory neurons (OSNs), coupling these complexes to the conserved ciliary trafficking pathway.

Its subcellular location is the cell membrane. Functionally, odorant receptor which mediates acceptance or avoidance behavior, depending on its substrates. The odorant receptor repertoire encodes a large collection of odor stimuli that vary widely in identity, intensity, and duration. May form a complex with Orco to form odorant-sensing units, providing sensitive and prolonged odorant signaling and calcium permeability. This chain is Putative odorant receptor 19b, found in Drosophila melanogaster (Fruit fly).